The primary structure comprises 1138 residues: Lysylphosphatidylglycerol biosynthesis bifunctional protein LysX (1138 aa).

Polar residues predominate over residues Met1–Asp15. The interval Met1–Arg34 is disordered. The phosphatidylglycerol lysyltransferase stretch occupies residues Met1–Asp646. A run of 6 helical transmembrane segments spans residues Ile56 to Leu76, Ile92 to Ala112, Ile119 to Leu139, Ile155 to Tyr175, Ala190 to Trp210, and Ile247 to Val267. A lysine--tRNA ligase region spans residues Arg647 to Ala1138. Residues Val698–Trp772 constitute a DNA-binding region (OB). Residues Asp1048 and Glu1055 each coordinate Mg(2+).

It in the N-terminal section; belongs to the LPG synthetase family. In the C-terminal section; belongs to the class-II aminoacyl-tRNA synthetase family. The cofactor is Mg(2+).

Its subcellular location is the cell membrane. The catalysed reaction is tRNA(Lys) + L-lysine + ATP = L-lysyl-tRNA(Lys) + AMP + diphosphate. The enzyme catalyses L-lysyl-tRNA(Lys) + a 1,2-diacyl-sn-glycero-3-phospho-(1'-sn-glycerol) = a 1,2-diacyl-sn-glycero-3-phospho-1'-(3'-O-L-lysyl)-sn-glycerol + tRNA(Lys). Its function is as follows. Catalyzes the production of L-lysyl-tRNA(Lys)transfer and the transfer of a lysyl group from L-lysyl-tRNA(Lys) to membrane-bound phosphatidylglycerol (PG), which produces lysylphosphatidylglycerol (LPG), one of the components of the bacterial membrane with a positive net charge. LPG synthesis contributes to the resistance to cationic antimicrobial peptides (CAMPs) and likely protects M.tuberculosis against the CAMPs produced by competiting microorganisms (bacteriocins). In fact, the modification of anionic phosphatidylglycerol with positively charged L-lysine results in repulsion of the peptides. The polypeptide is Lysylphosphatidylglycerol biosynthesis bifunctional protein LysX (lysX) (Gordonia bronchialis (strain ATCC 25592 / DSM 43247 / BCRC 13721 / JCM 3198 / KCTC 3076 / NBRC 16047 / NCTC 10667) (Rhodococcus bronchialis)).